The following is a 292-amino-acid chain: MDKVKIALQYMLPKHLLSRLVGKLAASEAGALTTAAIKWFIKQYKIDMSEAAQSEPEAYKSFNDFFTRALKPGIRPINTAANIMVHPVDGAVSQLGPIKDGRIFQAKGHHYSSLTLLGDQAEDAKRFEGGDFATIYLAPKDYHRIHMPIKGTLSKMTYVPGELFSVNPLTARHVPGLFARNERVVAIFETELGPLAMVLVGATIVASIETVWAGTITPPTGKQVFTWEYPTVGPDAITLDKGEEMGRFKLGSTVVMLFAKEAIDTFAEGVEPEAVTRMGQAFANLKDQSSAD.

Active-site charge relay system; for autoendoproteolytic cleavage activity residues include D89, H146, and S252. The active-site Schiff-base intermediate with substrate; via pyruvic acid; for decarboxylase activity is the S252. S252 is modified (pyruvic acid (Ser); by autocatalysis).

The protein belongs to the phosphatidylserine decarboxylase family. PSD-B subfamily. Prokaryotic type I sub-subfamily. As to quaternary structure, heterodimer of a large membrane-associated beta subunit and a small pyruvoyl-containing alpha subunit. It depends on pyruvate as a cofactor. Is synthesized initially as an inactive proenzyme. Formation of the active enzyme involves a self-maturation process in which the active site pyruvoyl group is generated from an internal serine residue via an autocatalytic post-translational modification. Two non-identical subunits are generated from the proenzyme in this reaction, and the pyruvate is formed at the N-terminus of the alpha chain, which is derived from the carboxyl end of the proenzyme. The autoendoproteolytic cleavage occurs by a canonical serine protease mechanism, in which the side chain hydroxyl group of the serine supplies its oxygen atom to form the C-terminus of the beta chain, while the remainder of the serine residue undergoes an oxidative deamination to produce ammonia and the pyruvoyl prosthetic group on the alpha chain. During this reaction, the Ser that is part of the protease active site of the proenzyme becomes the pyruvoyl prosthetic group, which constitutes an essential element of the active site of the mature decarboxylase.

Its subcellular location is the cell membrane. It carries out the reaction a 1,2-diacyl-sn-glycero-3-phospho-L-serine + H(+) = a 1,2-diacyl-sn-glycero-3-phosphoethanolamine + CO2. It functions in the pathway phospholipid metabolism; phosphatidylethanolamine biosynthesis; phosphatidylethanolamine from CDP-diacylglycerol: step 2/2. In terms of biological role, catalyzes the formation of phosphatidylethanolamine (PtdEtn) from phosphatidylserine (PtdSer). The polypeptide is Phosphatidylserine decarboxylase proenzyme (Shewanella sp. (strain MR-4)).